The primary structure comprises 1381 residues: DNA-directed RNA polymerase subunit beta (1381 aa).

It belongs to the RNA polymerase beta chain family. In terms of assembly, the RNAP catalytic core consists of 2 alpha, 1 beta, 1 beta' and 1 omega subunit. When a sigma factor is associated with the core the holoenzyme is formed, which can initiate transcription.

It carries out the reaction RNA(n) + a ribonucleoside 5'-triphosphate = RNA(n+1) + diphosphate. DNA-dependent RNA polymerase catalyzes the transcription of DNA into RNA using the four ribonucleoside triphosphates as substrates. In Sulfurimonas denitrificans (strain ATCC 33889 / DSM 1251) (Thiomicrospira denitrificans (strain ATCC 33889 / DSM 1251)), this protein is DNA-directed RNA polymerase subunit beta.